Consider the following 461-residue polypeptide: Trigger factor (461 aa).

A PPIase FKBP-type domain is found at 166–245; it reads GDFANIDLTA…VNSVKAEELP (80 aa).

The protein belongs to the FKBP-type PPIase family. Tig subfamily.

It is found in the cytoplasm. It catalyses the reaction [protein]-peptidylproline (omega=180) = [protein]-peptidylproline (omega=0). In terms of biological role, involved in protein export. Acts as a chaperone by maintaining the newly synthesized protein in an open conformation. Functions as a peptidyl-prolyl cis-trans isomerase. In Bifidobacterium animalis subsp. lactis (strain AD011), this protein is Trigger factor.